Here is a 371-residue protein sequence, read N- to C-terminus: Peptide chain release factor 2 (371 aa).

Position 251 is an N5-methylglutamine (Gln-251).

This sequence belongs to the prokaryotic/mitochondrial release factor family. Post-translationally, methylated by PrmC. Methylation increases the termination efficiency of RF2.

Its subcellular location is the cytoplasm. Functionally, peptide chain release factor 2 directs the termination of translation in response to the peptide chain termination codons UGA and UAA. The protein is Peptide chain release factor 2 of Pseudarthrobacter chlorophenolicus (strain ATCC 700700 / DSM 12829 / CIP 107037 / JCM 12360 / KCTC 9906 / NCIMB 13794 / A6) (Arthrobacter chlorophenolicus).